Reading from the N-terminus, the 137-residue chain is Urease subunit beta (137 aa).

Residues 118–137 are disordered; it reads IIAEENKVSENANKESGYNR. A compositionally biased stretch (polar residues) spans 126–137; that stretch reads SENANKESGYNR.

The protein belongs to the urease beta subunit family. As to quaternary structure, heterotrimer of UreA (gamma), UreB (beta) and UreC (alpha) subunits. Three heterotrimers associate to form the active enzyme.

It localises to the cytoplasm. The catalysed reaction is urea + 2 H2O + H(+) = hydrogencarbonate + 2 NH4(+). It functions in the pathway nitrogen metabolism; urea degradation; CO(2) and NH(3) from urea (urease route): step 1/1. The sequence is that of Urease subunit beta from Staphylococcus xylosus.